The following is a 329-amino-acid chain: tRNA (guanine(10)-N2)-dimethyltransferase (329 aa).

A THUMP domain is found at 40–143 (NVENVEIFER…KLWIGIRIRE (104 aa)).

Belongs to the methyltransferase superfamily. Trm-G10 family. In terms of assembly, monomer.

The protein resides in the cytoplasm. The enzyme catalyses guanosine(10) in tRNA + 2 S-adenosyl-L-methionine = N(2)-dimethylguanosine(10) in tRNA + 2 S-adenosyl-L-homocysteine + 2 H(+). Catalyzes the adenosylmethionine-dependent methylation of the exocyclic amino group (N(2)) of guanosine at position 10 of various tRNAs. Acts via a two-step process that leads to the formation of either N(2)-monomethyl (m(2)G) or N(2)-dimethylguanosine (m(2)(2)G). The sequence is that of tRNA (guanine(10)-N2)-dimethyltransferase (trmG10) from Pyrococcus abyssi (strain GE5 / Orsay).